The primary structure comprises 751 residues: Semaphorin-3C (751 aa).

The N-terminal stretch at 1–21 is a signal peptide; it reads MAVLALHAVFGIFIYFSSVKG. Positions 28–511 constitute a Sema domain; that stretch reads RVFLTFNELQ…SEEGVTQVPL (484 aa). A glycan (N-linked (GlcNAc...) asparagine) is linked at Asn81. Cys101 and Cys112 form a disulfide bridge. An N-linked (GlcNAc...) asparagine glycan is attached at Asn123. 3 disulfides stabilise this stretch: Cys130-Cys139, Cys266-Cys378, and Cys290-Cys338. N-linked (GlcNAc...) asparagine glycosylation occurs at Asn268. Asn465 carries an N-linked (GlcNAc...) asparagine glycan. A disulfide bridge connects residues Cys514 and Cys532. In terms of domain architecture, Ig-like C2-type spans 571 to 655; sequence AYRNAAETVQ…TENNFKQTLA (85 aa). 2 N-linked (GlcNAc...) asparagine glycosylation sites follow: Asn585 and Asn586. A disulfide bond links Cys643 and Cys709. The segment covering 712 to 731 has biased composition (basic and acidic residues); that stretch reads SRQQGQRREEPQKMRGDYSK. The interval 712–751 is disordered; the sequence is SRQQGQRREEPQKMRGDYSKLKALINSRKSRNRRNQLPAS.

The protein belongs to the semaphorin family. In terms of tissue distribution, collapsin-1, -2, -3, and -5 bind to overlapping but distinct axon tracts.

It is found in the secreted. Induces the collapse and paralysis of neuronal growth cones. Could potentially act as repulsive cues toward specific neuronal populations. Binds to neuropilin. The sequence is that of Semaphorin-3C (SEMA3C) from Gallus gallus (Chicken).